A 67-amino-acid chain; its full sequence is Light-harvesting protein B-870 alpha chain (67 aa).

Residue methionine 1 is modified to N-formylmethionine; in strain DSM 149 and DSM 151. At 1–12 (MWRIWRLFDPMR) the chain is on the cytoplasmic side. Residues 13–33 (AMVAQAVFLLGLAVLIHLMLL) form a helical membrane-spanning segment. Histidine 29 contributes to the a bacteriochlorophyll binding site. The Periplasmic portion of the chain corresponds to 34–67 (GTNKYNWLDGAKKAPAATAVAPVPAEVTSLAQAK).

Belongs to the antenna complex alpha subunit family. In terms of assembly, an alpha/beta heterodimer. The core complex is formed by different alpha and beta chains, binding bacteriochlorophyll molecules, and arranged most probably in tetrameric structures disposed around the reaction center. The non-pigmented gamma chains may constitute additional components. The N-terminus is blocked.

The protein localises to the cell inner membrane. Its function is as follows. Antenna complexes are light-harvesting systems, which transfer the excitation energy to the reaction centers. In Rubrivivax gelatinosus (Rhodocyclus gelatinosus), this protein is Light-harvesting protein B-870 alpha chain (pufA).